The sequence spans 148 residues: Large ribosomal subunit protein uL13 (148 aa).

Belongs to the universal ribosomal protein uL13 family. Part of the 50S ribosomal subunit.

Its function is as follows. This protein is one of the early assembly proteins of the 50S ribosomal subunit, although it is not seen to bind rRNA by itself. It is important during the early stages of 50S assembly. The sequence is that of Large ribosomal subunit protein uL13 from Oenococcus oeni (strain ATCC BAA-331 / PSU-1).